Here is a 216-residue protein sequence, read N- to C-terminus: Ribosomal RNA small subunit methyltransferase G (216 aa).

S-adenosyl-L-methionine-binding positions include G83, M88, 134 to 135 (VE), and R149.

Belongs to the methyltransferase superfamily. RNA methyltransferase RsmG family.

It is found in the cytoplasm. It catalyses the reaction guanosine(527) in 16S rRNA + S-adenosyl-L-methionine = N(7)-methylguanosine(527) in 16S rRNA + S-adenosyl-L-homocysteine. Its function is as follows. Specifically methylates the N7 position of guanine in position 527 of 16S rRNA. This is Ribosomal RNA small subunit methyltransferase G from Pseudomonas putida (strain GB-1).